The sequence spans 1136 residues: 3-O-alpha-D-galactosyl-alpha-L-arabinofuranosidase (1136 aa).

Residues 1–36 form the signal peptide; sequence MGISRNRLVPGLVGLAASAAIVLPLGIGMPVSSATA. Glu194 serves as the catalytic Proton donor. Glu321 functions as the Nucleophile in the catalytic mechanism. CBM6 domains follow at residues 521-656 and 669-779; these read QAIE…LLLY and VTYP…VTTA. Positions 987 to 1045 constitute a BIG2 domain; that stretch reads KASLKVGETLSLNASVTPDSVADKTVQWTSSDEQVATVDEHGVVKGVKAGTVTITATSV. The tract at residues 1049 to 1104 is disordered; it reads SRSGSVEVTVAEDSEQKPSGGDGDNNGEQTGKPDGNTGGQTSDSDAGADSGNNQKH. Residues 1087–1103 are compositionally biased toward polar residues; the sequence is GQTSDSDAGADSGNNQK. A helical transmembrane segment spans residues 1109–1129; it reads GAAVAAVAGVAVLLAGAGLLL.

The protein belongs to the glycosyl hydrolase 39 family.

The protein resides in the cell membrane. It is found in the secreted. It localises to the cell wall. The enzyme catalyses Hydrolysis of alpha-D-Galp-(1-&gt;3)-L-Araf disaccharides from non-reducing terminals in branches of type II arabinogalactan attached to proteins.. In terms of biological role, hydrolase involved in the degradation of the gum arabic arabinogalactan protein (AGP). Catalyzes the release of 3-O-alpha-D-galactopyranosyl-L-arabinose (alpha-D-Galp-(1-&gt;3)-L-Ara) from gum arabic AGP. Can also release 3-O-beta-L-arabinopyranosyl-L-arabinose (beta-L-Arap-(1-&gt;3)-L-Ara) from gum arabic AGP and larch AGP, but the alpha-D-Galp-(1-&gt;3)-L-Ara release activity is 594-fold higher than the beta-L-Arap-(1-&gt;3)-L-Ara release activity. Exhibits no reactivity toward p-nitrophenyl (pNP)-alpha-Araf or any other tested pNP substrate. Plays a crucial role in gum arabic AGP assimilation in B.longum. This Bifidobacterium longum subsp. longum protein is 3-O-alpha-D-galactosyl-alpha-L-arabinofuranosidase.